The sequence spans 267 residues: Tryptophan synthase alpha chain (267 aa).

Catalysis depends on proton acceptor residues glutamate 49 and aspartate 60.

It belongs to the TrpA family. As to quaternary structure, tetramer of two alpha and two beta chains.

The enzyme catalyses (1S,2R)-1-C-(indol-3-yl)glycerol 3-phosphate + L-serine = D-glyceraldehyde 3-phosphate + L-tryptophan + H2O. Its pathway is amino-acid biosynthesis; L-tryptophan biosynthesis; L-tryptophan from chorismate: step 5/5. Functionally, the alpha subunit is responsible for the aldol cleavage of indoleglycerol phosphate to indole and glyceraldehyde 3-phosphate. This chain is Tryptophan synthase alpha chain, found in Acidothermus cellulolyticus (strain ATCC 43068 / DSM 8971 / 11B).